The following is a 247-amino-acid chain: Adenosylcobinamide-GDP ribazoletransferase (247 aa).

The next 6 membrane-spanning stretches (helical) occupy residues 31-51, 55-75, 109-129, 135-155, 183-203, and 227-247; these read ILFYPLVGLIIGGILFLVTCI, LPALLLAAIVFALWIWLTGGL, IGVLSIVIVCLLKFALIYVLI, LFLICIPILGRVVPSILFLTT, VLLLPLYWEWQGLIAIISFLI, and AIEIGETVLIFTFVVSYFYLV.

Belongs to the CobS family. The cofactor is Mg(2+).

It localises to the cell inner membrane. It carries out the reaction alpha-ribazole + adenosylcob(III)inamide-GDP = adenosylcob(III)alamin + GMP + H(+). The catalysed reaction is alpha-ribazole 5'-phosphate + adenosylcob(III)inamide-GDP = adenosylcob(III)alamin 5'-phosphate + GMP + H(+). It participates in cofactor biosynthesis; adenosylcobalamin biosynthesis; adenosylcobalamin from cob(II)yrinate a,c-diamide: step 7/7. Functionally, joins adenosylcobinamide-GDP and alpha-ribazole to generate adenosylcobalamin (Ado-cobalamin). Also synthesizes adenosylcobalamin 5'-phosphate from adenosylcobinamide-GDP and alpha-ribazole 5'-phosphate. The polypeptide is Adenosylcobinamide-GDP ribazoletransferase (Acinetobacter baumannii (strain ACICU)).